Consider the following 128-residue polypeptide: Photosystem II reaction center Psb28 protein (128 aa).

The segment at 109–128 (SGLGYSQDSGEAPASDSSNG) is disordered. Residues 111–128 (LGYSQDSGEAPASDSSNG) show a composition bias toward polar residues.

It belongs to the Psb28 family. Part of the photosystem II complex.

It is found in the cellular thylakoid membrane. The chain is Photosystem II reaction center Psb28 protein from Synechococcus sp. (strain CC9311).